The sequence spans 466 residues: Vimentin (466 aa).

2 stretches are compositionally biased toward low complexity: residues 1–13 (MSTR…SYRR) and 20–33 (TSSR…YVTT). The segment at 1 to 33 (MSTRSVSSSSYRRMFGGSGTSSRPSSNRSYVTT) is disordered. N-acetylserine is present on Ser2. The tract at residues 2–95 (STRSVSSSSY…FSLADAINTE (94 aa)) is head. Position 5 is a phosphoserine (Ser5). Residue Ser7 is modified to Phosphoserine; by PKA and PKC; alternate. The O-linked (GlcNAc) serine; alternate glycan is linked to Ser7. Position 8 is a phosphoserine (Ser8). Ser9 and Ser10 each carry phosphoserine; by PKC. Thr20 is modified (phosphothreonine). Ser21 is subject to Phosphoserine; by PKC. Ser25 bears the Phosphoserine; by PKA and PKC mark. Phosphoserine; by PKC is present on Ser26. A glycan (O-linked (GlcNAc) threonine) is linked at Thr33. Ser34 carries O-linked (GlcNAc) serine; alternate glycosylation. Ser34 is modified (phosphoserine; by PKC; alternate). Phosphoserine; by CaMK2, PKA, PKC and ROCK2 is present on Ser39. A Phosphoserine; by PKC modification is found at Ser42. The residue at position 47 (Ser47) is a Phosphoserine; by PKA. At Ser49 the chain carries Phosphoserine. Residue Ser51 is modified to Phosphoserine; by PKA and PKC. Tyr53 carries the post-translational modification Phosphotyrosine. 2 positions are modified to phosphoserine: Ser55 and Ser56. Position 61 is a phosphotyrosine (Tyr61). Position 66 is a phosphoserine; by PKA and PKC (Ser66). A Phosphoserine; by AURKB and ROCK2 modification is found at Ser72. A Phosphoserine modification is found at Ser73. Ser83 is modified (phosphoserine; by CaMK2). Ser87 carries the post-translational modification Phosphoserine. Residues 96–131 (FKNTRTNEKVELQELNDRFANYIDKVRFLEQQNKIL) are coil 1A. Residues 96-131 (FKNTRTNEKVELQELNDRFANYIDKVRFLEQQNKIL) are a coiled coil. Residues 103–411 (EKVELQELND…KLLEGEESRI (309 aa)) form the IF rod domain. A Glycyl lysine isopeptide (Lys-Gly) (interchain with G-Cter in SUMO2) cross-link involves residue Lys104. Residue Tyr117 is modified to Phosphotyrosine. Residues Lys120, Lys129, and Lys139 each carry the N6-acetyllysine; alternate modification. N6-succinyllysine; alternate is present on residues Lys120 and Lys129. Glycyl lysine isopeptide (Lys-Gly) (interchain with G-Cter in SUMO2); alternate cross-links involve residues Lys120, Lys129, and Lys139. The interval 132-153 (LAELEQLKGQGKSRLGDLYEEE) is linker 1. The residue at position 144 (Ser144) is a Phosphoserine. Residues 154–245 (MRELRRQVDQ…KLHDEEIQEL (92 aa)) adopt a coiled-coil conformation. Residues 154-245 (MRELRRQVDQ…KLHDEEIQEL (92 aa)) form a coil 1B region. Position 168 is an N6-acetyllysine (Lys168). Lys188 bears the N6-acetyllysine; alternate mark. Lys188 bears the N6-succinyllysine; alternate mark. Ser214 carries the post-translational modification Phosphoserine. An N6-acetyllysine; alternate modification is found at Lys223. Lys223 is covalently cross-linked (Glycyl lysine isopeptide (Lys-Gly) (interchain with G-Cter in SUMO2); alternate). Position 226 is a phosphoserine (Ser226). Lys235 bears the N6-acetyllysine mark. The tract at residues 246 to 268 (QAQIQEQHVQIDVDVSKPDLTAA) is linker 12. Lys262 participates in a covalent cross-link: Glycyl lysine isopeptide (Lys-Gly) (interchain with G-Cter in SUMO2). Residues 269–407 (LRDVRQQYES…ATYRKLLEGE (139 aa)) are coil 2. Lys294 is modified (N6-acetyllysine; alternate). Lys294 bears the N6-succinyllysine; alternate mark. Lys294 participates in a covalent cross-link: Glycyl lysine isopeptide (Lys-Gly) (interchain with G-Cter in SUMO2); alternate. Ser299 is subject to Phosphoserine. Residues 303–407 (NRNNDALRQA…ATYRKLLEGE (105 aa)) adopt a coiled-coil conformation. Lys313 is covalently cross-linked (Glycyl lysine isopeptide (Lys-Gly) (interchain with G-Cter in SUMO2)). Ser325 carries the post-translational modification Phosphoserine. The [IL]-x-C-x-x-[DE] motif motif lies at 326–329 (LTCE). Lys373 carries the N6-acetyllysine; alternate modification. Lys373 is covalently cross-linked (Glycyl lysine isopeptide (Lys-Gly) (interchain with G-Cter in SUMO2); alternate). The tract at residues 408–466 (ESRISLPLPTFSSLNLRETNLESLPLVDTHSKRTLLIKTVETRDGQVINETSQHHDDLE) is tail. Phosphoserine occurs at positions 409, 412, 419, and 420. Thr426 carries the phosphothreonine modification. Ser430 carries the phosphoserine modification. Thr436 bears the Phosphothreonine mark. Ser438 bears the Phosphoserine mark. Residue Lys439 forms a Glycyl lysine isopeptide (Lys-Gly) (interchain with G-Cter in SUMO2) linkage. Lys445 carries the post-translational modification N6-acetyllysine; alternate. Lys445 is subject to N6-succinyllysine; alternate. A Glycyl lysine isopeptide (Lys-Gly) (interchain with G-Cter in SUMO2); alternate cross-link involves residue Lys445. A Glycyl lysine isopeptide (Lys-Gly) (interchain with G-Cter in SUMO1); alternate cross-link involves residue Lys445. Residues Thr446 and Thr458 each carry the phosphothreonine modification. Phosphoserine is present on Ser459.

The protein belongs to the intermediate filament family. Homomer assembled from elementary dimers. Identified in complexes that contain VIM, EZR, AHNAK, BFSP1, BFSP2, ANK2, PLEC, PRX and spectrin. Interacts with BCAS3. Interacts with LGSN. Interacts with SYNM. Interacts (via rod region) with PLEC (via CH 1 domain). Interacts with PLEC isoform 1C. Interacts with STK33. Interacts with LARP6. Interacts with RAB8B. Interacts with TOR1A; the interaction associates TOR1A with the cytoskeleton. Interacts with TOR1AIP1. Interacts with DIAPH1. Interacts with EPPK1; interaction is dependent of higher-order structure of intermediate filament. Interacts with the non-receptor tyrosine kinase SRMS; the interaction leads to phosphorylation of VIM. Interacts with NOD2. Interacts (via head region) with CORO1C. Interacts with HDGF. Interacts with PRKCE (via phorbol-ester/DAG-type 2 domain). Interacts with BFSP2. Interacts with PPL. Interacts with PKP1 and PKP2. Interacts with SCRIB (via PDZ domains); the interaction protects SCRIB from proteasomal degradation and facilitates SCRIB localization to intermediate filaments, the interaction is reduced by cell contact inhibition. In terms of processing, phosphorylation by PKN1 inhibits the formation of filaments. Filament disassembly during mitosis is promoted by phosphorylation at Ser-55 as well as by nestin. One of the most prominent phosphoproteins in various cells of mesenchymal origin. Phosphorylation is enhanced during cell division, at which time vimentin filaments are significantly reorganized. Phosphorylated at Ser-56 by CDK5 during neutrophil secretion in the cytoplasm. Phosphorylated by STK33. Phosphorylated on tyrosine residues by SRMS. Post-translationally, S-nitrosylation is induced by interferon-gamma and oxidatively-modified low-densitity lipoprotein (LDL(ox)) possibly implicating the iNOS-S100A8/9 transnitrosylase complex. Detected in eye lens fiber cells (at protein level). Expressed in retinal lens epithelial cells (at protein level). Expressed in Langerhans cells in the epidermis (at protein level).

It is found in the cytoplasm. It localises to the cytoskeleton. The protein resides in the nucleus matrix. Its subcellular location is the cell membrane. In terms of biological role, vimentins are class-III intermediate filaments found in various non-epithelial cells, especially mesenchymal cells. Vimentin is attached to the nucleus, endoplasmic reticulum, and mitochondria, either laterally or terminally. Plays a role in cell directional movement, orientation, cell sheet organization and Golgi complex polarization at the cell migration front. Protects SCRIB from proteasomal degradation and facilitates its localization to intermediate filaments in a cell contact-mediated manner. Functionally, involved with LARP6 in the stabilization of type I collagen mRNAs for CO1A1 and CO1A2. This Mus musculus (Mouse) protein is Vimentin.